An 824-amino-acid polypeptide reads, in one-letter code: Putative beta-glucuronidase (824 aa).

The helical transmembrane segment at 26 to 43 (YLKLVLVLYLIMVSWSGY) threads the bilayer. Catalysis depends on glutamate 430, which acts as the Proton donor.

Belongs to the glycosyl hydrolase 2 family.

It is found in the membrane. The catalysed reaction is a beta-D-glucuronoside + H2O = D-glucuronate + an alcohol. Glycoside hydrolase that may be involved in ulvan degradation. Ulvan is the main polysaccharide component of the Ulvales (green seaweed) cell wall. It is composed of disaccharide building blocks comprising 3-sulfated rhamnose (Rha3S) linked to D-glucuronic acid (GlcA), L-iduronic acid (IduA), or D-xylose (Xyl). In Formosa agariphila (strain DSM 15362 / KCTC 12365 / LMG 23005 / KMM 3901 / M-2Alg 35-1), this protein is Putative beta-glucuronidase.